The sequence spans 638 residues: Chaperone protein DnaK (638 aa).

Thr-198 is subject to Phosphothreonine; by autocatalysis. Residues 598 to 638 (YEASQKEAAEADAKADAAKDSDVVDADFEEIDEDDDKKKSA) are disordered. Positions 601-619 (SQKEAAEADAKADAAKDSD) are enriched in basic and acidic residues. Residues 620 to 632 (VVDADFEEIDEDD) show a composition bias toward acidic residues.

It belongs to the heat shock protein 70 family.

Functionally, acts as a chaperone. In Mesorhizobium japonicum (strain LMG 29417 / CECT 9101 / MAFF 303099) (Mesorhizobium loti (strain MAFF 303099)), this protein is Chaperone protein DnaK.